A 129-amino-acid polypeptide reads, in one-letter code: uncharacterized protein (129 aa).

Belongs to the HesB/IscA family.

This is an uncharacterized protein from Buchnera aphidicola subsp. Schizaphis graminum (strain Sg).